The chain runs to 126 residues: Large ribosomal subunit protein eL28 (126 aa).

At S2 the chain carries N-acetylserine.

Belongs to the eukaryotic ribosomal protein eL28 family.

The polypeptide is Large ribosomal subunit protein eL28 (rpl-28) (Caenorhabditis elegans).